We begin with the raw amino-acid sequence, 144 residues long: Universal stress protein F (144 aa).

It belongs to the universal stress protein A family. Homodimer.

The chain is Universal stress protein F (uspF) from Escherichia coli (strain K12).